A 206-amino-acid polypeptide reads, in one-letter code: Thymidylate kinase (206 aa).

Position 11–18 (11–18 (GIDGAGKT)) interacts with ATP.

It belongs to the thymidylate kinase family.

The catalysed reaction is dTMP + ATP = dTDP + ADP. Its function is as follows. Phosphorylation of dTMP to form dTDP in both de novo and salvage pathways of dTTP synthesis. The protein is Thymidylate kinase of Paraburkholderia phytofirmans (strain DSM 17436 / LMG 22146 / PsJN) (Burkholderia phytofirmans).